The sequence spans 257 residues: Septu protein PtuB (257 aa).

The 48-residue stretch at 49 to 96 (CVYCECRLDEESKYMEVEHFLPKDTYPNLVVNWRNLLPSCKRCNGKKG) folds into the HNH domain.

In terms of biological role, component of antiviral defense system Septu type I, composed of PtuA and PtuB. Expression of Septu type I in B.subtilis (strain BEST7003) confers resistance to phages SBSphiC and SBSphiJ. May be a nuclease. The chain is Septu protein PtuB from Bacillus thuringiensis.